The chain runs to 333 residues: Anthranilate phosphoribosyltransferase (333 aa).

5-phospho-alpha-D-ribose 1-diphosphate-binding positions include Gly80, 83–84, Thr88, 90–93, 108–116, and Ser120; these read GD, NLST, and KHGNRSASG. Gly80 contributes to the anthranilate binding site. Ser92 contributes to the Mg(2+) binding site. Anthranilate is bound at residue Asn111. Position 166 (Arg166) interacts with anthranilate. Positions 224 and 225 each coordinate Mg(2+).

This sequence belongs to the anthranilate phosphoribosyltransferase family. Homodimer. The cofactor is Mg(2+).

The enzyme catalyses N-(5-phospho-beta-D-ribosyl)anthranilate + diphosphate = 5-phospho-alpha-D-ribose 1-diphosphate + anthranilate. It participates in amino-acid biosynthesis; L-tryptophan biosynthesis; L-tryptophan from chorismate: step 2/5. Catalyzes the transfer of the phosphoribosyl group of 5-phosphorylribose-1-pyrophosphate (PRPP) to anthranilate to yield N-(5'-phosphoribosyl)-anthranilate (PRA). This Pyrobaculum arsenaticum (strain DSM 13514 / JCM 11321 / PZ6) protein is Anthranilate phosphoribosyltransferase.